The sequence spans 56 residues: Small ribosomal subunit protein bS21 (56 aa).

This sequence belongs to the bacterial ribosomal protein bS21 family.

This Dictyoglomus thermophilum (strain ATCC 35947 / DSM 3960 / H-6-12) protein is Small ribosomal subunit protein bS21.